Reading from the N-terminus, the 430-residue chain is MPFITQVYAREVLDSRGNPTVEVEVFTESGAFGRSIVPSGASTGEYEAVELRDGDKSRYLGKGVLKAVENVNTIIAQELEGNYSVLDQVVIDKALIELDGTENKGKLGANAILGVSMAVAHAAADYLDVPLYQYLGGFNSKQLPVPMMNILNGGAHADNNVDIQEFMVMPVGAESFRHALRIGAEIFHNLKAVLKDKGYNTAVGDEGGFAPNLGSNEEAITVILEAIEKAGYKPGEEVKLAMDVASSELFNKEDGKYHLDGEGVVKTSEEMVDWYEELTNKYPIISIEDGLDENDWAGHKLLTERIGSRVQLVGDDLFVTNTKKLAAGIEQGVGNSILIKVNQIGTLTETFEAIEMAKRAGYTAVISHRSGESEDATIADIAVATNAGQIKTGAPSRTDRVAKYNQLLRIEDQLGSTAEYLGLKSFYNLK.

Glutamine 164 serves as a coordination point for (2R)-2-phosphoglycerate. Glutamate 206 (proton donor) is an active-site residue. The Mg(2+) site is built by aspartate 243, glutamate 288, and aspartate 315. (2R)-2-phosphoglycerate-binding residues include lysine 340, arginine 369, serine 370, and lysine 391. The Proton acceptor role is filled by lysine 340.

The protein belongs to the enolase family. The cofactor is Mg(2+).

The protein localises to the cytoplasm. It is found in the secreted. The protein resides in the cell surface. It catalyses the reaction (2R)-2-phosphoglycerate = phosphoenolpyruvate + H2O. The protein operates within carbohydrate degradation; glycolysis; pyruvate from D-glyceraldehyde 3-phosphate: step 4/5. Catalyzes the reversible conversion of 2-phosphoglycerate (2-PG) into phosphoenolpyruvate (PEP). It is essential for the degradation of carbohydrates via glycolysis. This chain is Enolase, found in Lysinibacillus sphaericus (strain C3-41).